Reading from the N-terminus, the 268-residue chain is Octanoyltransferase (268 aa).

The BPL/LPL catalytic domain occupies 47–243 (PETPDQVWLV…ALCEVLAAHE (197 aa)). Substrate contacts are provided by residues 87 to 94 (RGGQITYH), 159 to 161 (ALG), and 172 to 174 (GVS). Catalysis depends on C190, which acts as the Acyl-thioester intermediate.

It belongs to the LipB family.

It is found in the cytoplasm. The enzyme catalyses octanoyl-[ACP] + L-lysyl-[protein] = N(6)-octanoyl-L-lysyl-[protein] + holo-[ACP] + H(+). It participates in protein modification; protein lipoylation via endogenous pathway; protein N(6)-(lipoyl)lysine from octanoyl-[acyl-carrier-protein]: step 1/2. Functionally, catalyzes the transfer of endogenously produced octanoic acid from octanoyl-acyl-carrier-protein onto the lipoyl domains of lipoate-dependent enzymes. Lipoyl-ACP can also act as a substrate although octanoyl-ACP is likely to be the physiological substrate. In Cupriavidus necator (strain ATCC 17699 / DSM 428 / KCTC 22496 / NCIMB 10442 / H16 / Stanier 337) (Ralstonia eutropha), this protein is Octanoyltransferase.